The following is a 737-amino-acid chain: Photosystem I P700 chlorophyll a apoprotein A2 (737 aa).

A run of 8 helical transmembrane segments spans residues 46 to 69 (LFSTHFGHLAIIGLWVSGNLFHIA), 135 to 158 (LYQGSIFMMILSAWALFAGWLHLQ), 175 to 199 (LNHHLAVLFGFSSIAWTGHLVHVAI), 273 to 291 (IAHHHLAIGCIFVIAGHMY), 333 to 356 (LHFQLGLALASLGVVTSLVAQHMY), 372 to 398 (AALYTHHQYIAIALMCGAFAHGAIFFI), 420 to 442 (AIISHLSWVSLFLGFHTLGLYVH), and 520 to 538 (FLVHHAIALGLHTTTLILV). Residues Cys-562 and Cys-571 each contribute to the [4Fe-4S] cluster site. The next 2 helical transmembrane spans lie at 578 to 599 (AFYLAVFWALNTVGWVTFYWHW) and 646 to 668 (LAVWAWMFLFGHLVWATGFMFLI). Chlorophyll a is bound by residues His-657, Met-665, and Tyr-673. A phylloquinone-binding site is contributed by Trp-674. A helical membrane pass occupies residues 710–730 (VVGLAHFSVGYVLTYAAFLIA).

Belongs to the PsaA/PsaB family. As to quaternary structure, the PsaA/B heterodimer binds the P700 chlorophyll special pair and subsequent electron acceptors. PSI consists of a core antenna complex that captures photons, and an electron transfer chain that converts photonic excitation into a charge separation. The cyanobacterial PSI reaction center is composed of one copy each of PsaA,B,C,D,E,F,I,J,K,L,M and X, and forms trimeric complexes. PSI electron transfer chain: 5 chlorophyll a, 1 chlorophyll a', 2 phylloquinones and 3 4Fe-4S clusters. PSI core antenna: 90 chlorophyll a, 22 carotenoids, 3 phospholipids and 1 galactolipid. P700 is a chlorophyll a/chlorophyll a' dimer, A0 is one or more chlorophyll a, A1 is one or both phylloquinones and FX is a shared 4Fe-4S iron-sulfur center. is required as a cofactor.

It localises to the cellular thylakoid membrane. It carries out the reaction reduced [plastocyanin] + hnu + oxidized [2Fe-2S]-[ferredoxin] = oxidized [plastocyanin] + reduced [2Fe-2S]-[ferredoxin]. Functionally, psaA and PsaB bind P700, the primary electron donor of photosystem I (PSI), as well as the electron acceptors A0, A1 and FX. PSI is a plastocyanin/cytochrome c6-ferredoxin oxidoreductase, converting photonic excitation into a charge separation, which transfers an electron from the donor P700 chlorophyll pair to the spectroscopically characterized acceptors A0, A1, FX, FA and FB in turn. Oxidized P700 is reduced on the lumenal side of the thylakoid membrane by plastocyanin or cytochrome c6. The chain is Photosystem I P700 chlorophyll a apoprotein A2 from Parasynechococcus marenigrum (strain WH8102).